We begin with the raw amino-acid sequence, 299 residues long: Regucalcin (299 aa).

Glu18 is a binding site for a divalent metal cation. Residues Arg101, Asn103, and Glu121 each contribute to the substrate site. A divalent metal cation-binding residues include Asn154 and Asp204. Residue Asp204 is the Proton donor/acceptor of the active site.

It belongs to the SMP-30/CGR1 family. Requires Zn(2+) as cofactor. The cofactor is Mn(2+). Ca(2+) serves as cofactor. Mg(2+) is required as a cofactor. Expressed in the liver, and in the pronephros from the late tadpole stage.

The protein resides in the cytoplasm. The catalysed reaction is D-glucono-1,5-lactone + H2O = D-gluconate + H(+). It participates in cofactor biosynthesis; L-ascorbate biosynthesis via UDP-alpha-D-glucuronate pathway; L-ascorbate from UDP-alpha-D-glucuronate: step 3/4. Its function is as follows. Gluconolactonase with low activity towards other sugar lactones, including gulonolactone and galactonolactone. Catalyzes a key step in ascorbic acid (vitamin C) biosynthesis. Can also hydrolyze diisopropyl phosphorofluoridate and phenylacetate (in vitro). Calcium-binding protein. Modulates Ca(2+) signaling, and Ca(2+)-dependent cellular processes and enzyme activities. This Xenopus laevis (African clawed frog) protein is Regucalcin.